Here is a 217-residue protein sequence, read N- to C-terminus: UPF0502 protein PFLU_2135 (217 aa).

The protein belongs to the UPF0502 family.

The sequence is that of UPF0502 protein PFLU_2135 from Pseudomonas fluorescens (strain SBW25).